Here is a 78-residue protein sequence, read N- to C-terminus: Small ribosomal subunit protein bS16 (78 aa).

Belongs to the bacterial ribosomal protein bS16 family.

This Thermodesulfovibrio yellowstonii (strain ATCC 51303 / DSM 11347 / YP87) protein is Small ribosomal subunit protein bS16.